Reading from the N-terminus, the 1600-residue chain is Eukaryotic translation initiation factor 4 gamma 1 (1600 aa).

The tract at residues 1–88 (MNKAPQPTGP…ARPGPAPHVY (88 aa)) is disordered. The span at 7–24 (PTGPPPARSPGLPQPAFP) shows a compositional bias: pro residues. Position 15 is a phosphoserine (Ser15). Residues 34–48 (STPQATQMNTPSQPR) show a composition bias toward polar residues. Positions 60–79 (PSRAQPPSSAASRVQSAAPA) are enriched in low complexity. Residues Arg80 and Arg117 each carry the omega-N-methylarginine modification. 5 disordered regions span residues 173 to 230 (NQPP…NGES), 243 to 326 (SQGA…LSPE), 366 to 501 (ETHE…QLSQ), 507 to 526 (AATQ…KELN), and 541 to 606 (VDPA…DQWK). The tract at residues 179–207 (APKRERKTIRIRDPNQGGKDITEEIMSGA) is PABPC1-binding. A compositionally biased stretch (polar residues) spans 208–220 (RTASTPTPPQTGG). Thr214 carries the phosphothreonine modification. Phosphoserine is present on Ser230. Over residues 269–280 (SPSPTPSPPPIL) the composition is skewed to pro residues. Residue Ser324 is modified to Phosphoserine. Positions 438 to 449 (KVSSAALASILS) are enriched in low complexity. A compositionally biased stretch (acidic residues) spans 463–479 (QEEEMEEDDDDEEGGEA). Positions 551–562 (QPPTGSNPSPES) are enriched in polar residues. 2 stretches are compositionally biased toward basic and acidic residues: residues 578-587 (WDSKEDKIHN) and 596-606 (QKYEYKSDQWK). An N6-acetyllysine modification is found at Lys606. The tract at residues 611 to 622 (EEKKRYDREFLL) is EIF4E-binding. A Phosphothreonine modification is found at Thr651. 2 disordered regions span residues 667–719 (GPDF…TRKI) and 734–760 (AEKA…DGSK). Residues 686 to 1089 (GPPRGGPGGE…GSIDSNNQLF (404 aa)) are eIF3/EIF4A-binding. Residues Arg689 and Arg698 each carry the omega-N-methylarginine modification. Low complexity predominate over residues 697 to 707 (PRGPAGLGPRR). Residues 745 to 760 (TAADKDRGEEDADGSK) show a composition bias toward basic and acidic residues. The 229-residue stretch at 765 to 993 (FRRVRSILNK…QDVLDLRQSN (229 aa)) folds into the MIF4G domain. 2 disordered regions span residues 1029-1117 (AKGS…SEAT) and 1129-1238 (QQTL…AALS). The residue at position 1032 (Ser1032) is a Phosphoserine. Residues Arg1036 and Arg1046 each carry the omega-N-methylarginine modification. Phosphoserine is present on residues Ser1081 and Ser1096. Lys1099 is modified (N6-acetyllysine). A phosphoserine mark is found at Ser1147 and Ser1149. Residues 1148 to 1180 (LSRERGEKAGDRGDRLERSERGGDRGDRLDRAR) are compositionally biased toward basic and acidic residues. The residue at position 1187 (Ser1187) is a Phosphoserine; by PKC/PRKCA. Residues 1188–1225 (FSKEVEERSRERPSQPEGLRKAASLTEDRGRDPVKREA) show a composition bias toward basic and acidic residues. 3 positions are modified to phosphoserine: Ser1189, Ser1196, and Ser1211. A Phosphothreonine modification is found at Thr1213. Phosphoserine is present on residues Ser1231 and Ser1238. The MI domain occupies 1241–1363 (EVEKKSKAII…PMGELFREIT (123 aa)). A W2 domain is found at 1429–1599 (ESEAPGQRTL…REAEDEESDH (171 aa)). The interval 1450–1600 (LLKDGGSNQR…EAEDEESDHN (151 aa)) is EIF4A-binding. The necessary but not sufficient for MKNK1-binding stretch occupies residues 1585–1600 (FFNWLREAEDEESDHN). The residue at position 1597 (Ser1597) is a Phosphoserine.

It belongs to the eukaryotic initiation factor 4G family. EIF4F is a multi-subunit complex, the composition of which varies with external and internal environmental conditions. It is composed of at least EIF4A, EIF4E (cap-binding) and EIF4G1/EIF4G3. Interacts with eIF3 complex, mutually exclusive with EIF4A1 or EIF4A2, EIF4E and through its N-terminus with PABPC1. Interacts with EIF4E or with EIF1 (mutually exclusive) through a common binding site. Interacts through its C-terminus with the serine/threonine kinases MKNK1, and with MKNK2. Appears to act as a scaffold protein, holding these enzymes in place to phosphorylate EIF4E. Non-phosphorylated EIF4EBP1 competes with EIF4G1/EIF4G3 to interact with EIF4E; insulin stimulated MAP-kinase (MAPK1 and MAPK3) phosphorylation of EIF4EBP1 causes dissociation of the complex allowing EIF4G1/EIF4G3 to bind and consequent initiation of translation. EIF4G1/EIF4G3 interacts with PABPC1 to bring about circularization of the mRNA. Interacts with EIF4E3. Interacts with CIRBP and MIF4GD. Interacts with RBM4. Interacts with HNRNPD/AUF1; the interaction requires RNA. Interacts with DDX3X; the interaction requires RNA. Interacts with DAZAP2. As to quaternary structure, (Microbial infection) Interacts with murine norovirus viral genome-linked protein (via C-terminus); this interaction plays a role in translation of viral proteins. In terms of processing, phosphorylated at multiple sites in vivo. Phosphorylation at Ser-1187 by PRKCA induces binding to MKNK1.

Its subcellular location is the cytoplasm. The protein localises to the nucleus. The protein resides in the stress granule. Functionally, component of the protein complex eIF4F, which is involved in the recognition of the mRNA cap, ATP-dependent unwinding of 5'-terminal secondary structure and recruitment of mRNA to the ribosome. Exists in two complexes, either with EIF1 or with EIF4E (mutually exclusive). Together with EIF1, is required for leaky scanning, in particular for avoiding cap-proximal start codon. Together with EIF4E, antagonizes the scanning promoted by EIF1-EIF4G1 and locates the start codon (through a TISU element) without scanning. As a member of the eIF4F complex, required for endoplasmic reticulum stress-induced ATF4 mRNA translation. The sequence is that of Eukaryotic translation initiation factor 4 gamma 1 (Eif4g1) from Mus musculus (Mouse).